The primary structure comprises 502 residues: Dynein regulatory complex subunit 2 (502 aa).

Coiled coils occupy residues 96–160 and 252–285; these read DSVI…RKAI and EKSSKEIEVQMKKIQRLQEAISALKGKIVAHSRE.

It belongs to the DRC2 family. Component of the nexin-dynein regulatory complex (N-DRC). Interacts with DRC1.

It is found in the cytoplasm. The protein resides in the cytoskeleton. The protein localises to the flagellum basal body. It localises to the cell projection. Its subcellular location is the cilium. It is found in the flagellum. The protein resides in the flagellum axoneme. Component of the nexin-dynein regulatory complex (N-DRC), a key regulator of ciliary/flagellar motility which maintains the alignment and integrity of the distal axoneme and regulates microtubule sliding in motile axonemes. Plays a critical role in the assembly of N-DRC and also stabilizes the assembly of multiple inner dynein arms and radial spokes. Coassembles with DRC1 to form a central scaffold needed for assembly of the N-DRC and its attachment to the outer doublet microtubules. The sequence is that of Dynein regulatory complex subunit 2 (Ccdc65) from Rattus norvegicus (Rat).